A 331-amino-acid polypeptide reads, in one-letter code: Holliday junction branch migration complex subunit RuvB (331 aa).

A large ATPase domain (RuvB-L) region spans residues 1–178 (MRNSIFEQEE…FGITLRLDFY (178 aa)). Residues Leu-17, Arg-18, Gly-59, Lys-62, Thr-63, Thr-64, 125 to 127 (EDY), Arg-168, Tyr-178, and Arg-215 each bind ATP. Thr-63 contributes to the Mg(2+) binding site. Residues 179–249 (TVSELLQLLQ…FADLALNKME (71 aa)) are small ATPAse domain (RuvB-S). The head domain (RuvB-H) stretch occupies residues 252 to 331 (QFGLDKLDYT…LSTINSARLP (80 aa)). The DNA site is built by Arg-307 and Arg-312.

Belongs to the RuvB family. Homohexamer. Forms an RuvA(8)-RuvB(12)-Holliday junction (HJ) complex. HJ DNA is sandwiched between 2 RuvA tetramers; dsDNA enters through RuvA and exits via RuvB. An RuvB hexamer assembles on each DNA strand where it exits the tetramer. Each RuvB hexamer is contacted by two RuvA subunits (via domain III) on 2 adjacent RuvB subunits; this complex drives branch migration. In the full resolvosome a probable DNA-RuvA(4)-RuvB(12)-RuvC(2) complex forms which resolves the HJ.

The protein localises to the cytoplasm. It catalyses the reaction ATP + H2O = ADP + phosphate + H(+). The RuvA-RuvB-RuvC complex processes Holliday junction (HJ) DNA during genetic recombination and DNA repair, while the RuvA-RuvB complex plays an important role in the rescue of blocked DNA replication forks via replication fork reversal (RFR). RuvA specifically binds to HJ cruciform DNA, conferring on it an open structure. The RuvB hexamer acts as an ATP-dependent pump, pulling dsDNA into and through the RuvAB complex. RuvB forms 2 homohexamers on either side of HJ DNA bound by 1 or 2 RuvA tetramers; 4 subunits per hexamer contact DNA at a time. Coordinated motions by a converter formed by DNA-disengaged RuvB subunits stimulates ATP hydrolysis and nucleotide exchange. Immobilization of the converter enables RuvB to convert the ATP-contained energy into a lever motion, pulling 2 nucleotides of DNA out of the RuvA tetramer per ATP hydrolyzed, thus driving DNA branch migration. The RuvB motors rotate together with the DNA substrate, which together with the progressing nucleotide cycle form the mechanistic basis for DNA recombination by continuous HJ branch migration. Branch migration allows RuvC to scan DNA until it finds its consensus sequence, where it cleaves and resolves cruciform DNA. This chain is Holliday junction branch migration complex subunit RuvB, found in Neorickettsia sennetsu (strain ATCC VR-367 / Miyayama) (Ehrlichia sennetsu).